A 340-amino-acid polypeptide reads, in one-letter code: Biotin synthase (340 aa).

The Radical SAM core domain maps to 47–269; the sequence is SELQLSQLLS…VAVARIVCPK (223 aa). [4Fe-4S] cluster-binding residues include C62, C66, and C69. The [2Fe-2S] cluster site is built by C106, C137, C197, and R273.

This sequence belongs to the radical SAM superfamily. Biotin synthase family. In terms of assembly, homodimer. [4Fe-4S] cluster serves as cofactor. The cofactor is [2Fe-2S] cluster.

The catalysed reaction is (4R,5S)-dethiobiotin + (sulfur carrier)-SH + 2 reduced [2Fe-2S]-[ferredoxin] + 2 S-adenosyl-L-methionine = (sulfur carrier)-H + biotin + 2 5'-deoxyadenosine + 2 L-methionine + 2 oxidized [2Fe-2S]-[ferredoxin]. Its pathway is cofactor biosynthesis; biotin biosynthesis; biotin from 7,8-diaminononanoate: step 2/2. Catalyzes the conversion of dethiobiotin (DTB) to biotin by the insertion of a sulfur atom into dethiobiotin via a radical-based mechanism. The chain is Biotin synthase from Caulobacter sp. (strain K31).